The chain runs to 410 residues: Interleukin-1 receptor type 2 (410 aa).

A signal peptide spans 1–13; that stretch reads MFILLVLVTGVSA. Residues 14–355 lie on the Extracellular side of the membrane; sequence FTTPTVVHTG…SQSLHTTVKE (342 aa). 3 consecutive Ig-like C2-type domains span residues 35–136, 146–237, and 249–357; these read PTVH…VELK, PHVS…RNIE, and PVII…KEVS. Disulfide bonds link C42–C128, C64–C120, and C164–C219. N-linked (GlcNAc...) asparagine glycosylation is found at N124, N208, N231, and N289. C270 and C338 are disulfide-bonded. Residues 356–381 traverse the membrane as a helical segment; sequence VSSTFSWSIALAPLSLIILVVGAIWM. Residues 382-410 lie on the Cytoplasmic side of the membrane; it reads RRRCKRRAGKTYGLTKLRTDNQDFPSSPN.

Belongs to the interleukin-1 receptor family. In terms of assembly, associates with IL1RAP to form a non-signaling interleukin-1 receptor complex. In terms of processing, a soluble form (sIL1R2) can also be produced by proteolytic cleavage at the cell surface (shedding) involving a metalloproteinase. In terms of tissue distribution, strongly expressed in B-cells, with levels 21 times higher than IL1R1. In T-cells expressed 5 times more compared with IL1R1.

The protein localises to the membrane. The protein resides in the cell membrane. It localises to the secreted. Its function is as follows. Non-signaling receptor for IL1A, IL1B and IL1RN. Reduces IL1B activities. Serves as a decoy receptor by competitive binding to IL1B and preventing its binding to IL1R1. Also modulates cellular response through non-signaling association with IL1RAP after binding to IL1B. IL1R2 (membrane and secreted forms) preferentially binds IL1B and poorly IL1A and IL1RN. The secreted IL1R2 recruits secreted IL1RAP with high affinity; this complex formation may be the dominant mechanism for neutralization of IL1B by secreted/soluble receptors. This chain is Interleukin-1 receptor type 2 (Il1r2), found in Mus musculus (Mouse).